The primary structure comprises 150 residues: Interferon antagonist OPG027 (150 aa).

It belongs to the orthopoxvirus OPG027 family.

Functionally, inhibits antiviral activity induced by type I interferons. Does not block signal transduction of IFN, but is important to counteract the host antiviral state induced by a pre-treatment with IFN. This is Interferon antagonist OPG027 (OPG027) from Homo sapiens (Human).